The chain runs to 346 residues: Phosphoribosylformylglycinamidine cyclo-ligase (346 aa).

The protein belongs to the AIR synthase family.

The protein resides in the cytoplasm. The enzyme catalyses 2-formamido-N(1)-(5-O-phospho-beta-D-ribosyl)acetamidine + ATP = 5-amino-1-(5-phospho-beta-D-ribosyl)imidazole + ADP + phosphate + H(+). It functions in the pathway purine metabolism; IMP biosynthesis via de novo pathway; 5-amino-1-(5-phospho-D-ribosyl)imidazole from N(2)-formyl-N(1)-(5-phospho-D-ribosyl)glycinamide: step 2/2. This Bacillus cereus (strain G9842) protein is Phosphoribosylformylglycinamidine cyclo-ligase.